The chain runs to 68 residues: Large ribosomal subunit protein uL29 (68 aa).

Belongs to the universal ribosomal protein uL29 family.

This chain is Large ribosomal subunit protein uL29, found in Nitrobacter hamburgensis (strain DSM 10229 / NCIMB 13809 / X14).